The sequence spans 1033 residues: SIT4-associating protein SAP190 (1033 aa).

Disordered stretches follow at residues 32-82, 147-213, 768-813, and 828-1033; these read DQDD…TTES, PEII…QVET, FGND…HDSG, and ENEE…KEAF. Residues 158–170 show a composition bias toward basic and acidic residues; it reads ILIERDRKDKKED. The span at 171–182 shows a compositional bias: acidic residues; the sequence is AEEGGDSEETTN. A compositionally biased stretch (basic and acidic residues) spans 183–195; sequence DSDHDSGDERSVD. Ser-774 carries the phosphoserine modification. 2 stretches are compositionally biased toward acidic residues: residues 784–793 and 828–838; these read SEDIIGDTEG and ENEEDYAEYSD. Phosphoserine is present on residues Ser-857, Ser-862, and Ser-892. Residues 858 to 879 show a composition bias toward basic and acidic residues; sequence DDGKSKSAESEFTDKISEHRDG. The span at 909–924 shows a compositional bias: polar residues; it reads SRSQPSDPKLQDQNIF. Positions 932–944 are enriched in acidic residues; it reads GVGDDDDYMDPND. The residue at position 990 (Thr-990) is a Phosphothreonine. A Phosphoserine modification is found at Ser-991. Residues 1000-1018 are compositionally biased toward acidic residues; sequence ISSDEEDSEDEDEENDMGN.

Belongs to the SAPS family. In terms of assembly, associates with the SIT4 protein phosphatase catalytic subunit in a cell-cycle-dependent manner. Hyperphosphorylated in the absence of SIT4.

The protein localises to the cytoplasm. Its function is as follows. Positive regulator of protein phosphatase SIT4. Involved in the general amino acid control (GAAC) response regulated by TOR. Involved in the dephosphorylation of the elongator complex subunit IKI3. The protein is SIT4-associating protein SAP190 (SAP190) of Saccharomyces cerevisiae (strain AWRI1631) (Baker's yeast).